The following is a 277-amino-acid chain: Large ribosomal subunit protein uL2 (277 aa).

The segment at 222-277 (GVAMNPVDHPHGGGEGRTSGGRHPVSPWGKSTKGKRTRSNKATDKFIMHTRHQRKK) is disordered.

Belongs to the universal ribosomal protein uL2 family. As to quaternary structure, part of the 50S ribosomal subunit. Forms a bridge to the 30S subunit in the 70S ribosome.

In terms of biological role, one of the primary rRNA binding proteins. Required for association of the 30S and 50S subunits to form the 70S ribosome, for tRNA binding and peptide bond formation. It has been suggested to have peptidyltransferase activity; this is somewhat controversial. Makes several contacts with the 16S rRNA in the 70S ribosome. The polypeptide is Large ribosomal subunit protein uL2 (Bartonella quintana (strain Toulouse) (Rochalimaea quintana)).